We begin with the raw amino-acid sequence, 913 residues long: Protein translocase subunit SecA (913 aa).

Residues Gln87, 105–109 (GEGKT), and Asp517 each bind ATP. Disordered stretches follow at residues 568-588 (ESRR…DPGS) and 871-913 (EVAV…GKLS). Zn(2+)-binding residues include Cys897, Cys899, Cys908, and His909. Positions 903–913 (KKYKQCHGKLS) are enriched in basic residues.

It belongs to the SecA family. In terms of assembly, monomer and homodimer. Part of the essential Sec protein translocation apparatus which comprises SecA, SecYEG and auxiliary proteins SecDF-YajC and YidC. Requires Zn(2+) as cofactor.

It localises to the cell inner membrane. It is found in the cytoplasm. It catalyses the reaction ATP + H2O + cellular proteinSide 1 = ADP + phosphate + cellular proteinSide 2.. In terms of biological role, part of the Sec protein translocase complex. Interacts with the SecYEG preprotein conducting channel. Has a central role in coupling the hydrolysis of ATP to the transfer of proteins into and across the cell membrane, serving both as a receptor for the preprotein-SecB complex and as an ATP-driven molecular motor driving the stepwise translocation of polypeptide chains across the membrane. The polypeptide is Protein translocase subunit SecA (Coxiella burnetii (strain RSA 493 / Nine Mile phase I)).